Here is a 567-residue protein sequence, read N- to C-terminus: Galectin-3-binding protein A (567 aa).

The signal sequence occupies residues 1–16; the sequence is MIMYIIWALLFIPVSA. In terms of domain architecture, SRCR spans 34–133; the sequence is VRLVGGLPSS…HQEDAGVVCD (100 aa). Intrachain disulfides connect cysteine 58–cysteine 122, cysteine 71–cysteine 132, and cysteine 102–cysteine 112. N-linked (GlcNAc...) asparagine glycosylation is found at asparagine 137, asparagine 197, asparagine 200, and asparagine 204. In terms of domain architecture, BACK spans 272 to 374; it reads PVSMYEYGLR…IPVDKLYDIQ (103 aa). N-linked (GlcNAc...) asparagine glycosylation is found at asparagine 412, asparagine 432, and asparagine 543.

It localises to the secreted. It is found in the extracellular space. Its subcellular location is the extracellular matrix. Its function is as follows. Promotes integrin-mediated cell adhesion. This Danio rerio (Zebrafish) protein is Galectin-3-binding protein A (lgals3bpa).